The chain runs to 494 residues: Probable serine/threonine-protein kinase BSK3 (494 aa).

G2 carries the N-myristoyl glycine lipid modification. One can recognise a Protein kinase domain in the interval 61-316; that stretch reads ENIVSEHGEK…SLVQALAPLQ (256 aa). Residues 67–75 and K89 contribute to the ATP site; that span reads HGEKAPNVV. The Proton acceptor role is filled by D183. Residues S213 and S215 each carry the phosphoserine modification. The stretch at 423–456 is one TPR repeat; sequence PTIYARRCLSYLMNDKAEQALSDAMQALVISPTW.

As to quaternary structure, interacts with BRI1 and BSL1. In terms of processing, phosphorylated at Ser-213 and Ser-215 by BRI1. Phosphorylation at Ser-215 is required for its function in the regulation of brassinosteroid signaling. Phosphorylation by BRI1 disrupts the interaction between its TPR and kinase domains, thereby increasing the binding between its kinase domain and BSL1.

It is found in the cell membrane. The catalysed reaction is L-seryl-[protein] + ATP = O-phospho-L-seryl-[protein] + ADP + H(+). It catalyses the reaction L-threonyl-[protein] + ATP = O-phospho-L-threonyl-[protein] + ADP + H(+). Probable serine/threonine kinase that acts as a positive regulator of brassinosteroid (BR) signaling downstream of BRI1. The polypeptide is Probable serine/threonine-protein kinase BSK3 (Oryza sativa subsp. japonica (Rice)).